Here is a 291-residue protein sequence, read N- to C-terminus: G1/S-specific cyclin-D2 (291 aa).

The segment at 264–291 is disordered; it reads QQQQSNPSKTIEELDQASTPTDVRDINL. The residue at position 282 (threonine 282) is a Phosphothreonine.

Belongs to the cyclin family. Cyclin D subfamily. In terms of assembly, interacts with the CDK4 and CDK6 protein kinases to form a serine/threonine kinase holoenzyme complex. The cyclin subunit imparts substrate specificity to the complex. Phosphorylation at Thr-282 by MAP kinases is required for ubiquitination and degradation by the DCX(AMBRA1) complex. Post-translationally, ubiquitinated by the DCX(AMBRA1) complex during the transition from G1 to S cell phase, leading to its degradation: ubiquitination is dependent on Thr-282 phosphorylation. The DCX(AMBRA1) complex represents the major regulator of CCND2 stability during the G1/S transition.

The protein resides in the nucleus. It is found in the cytoplasm. The protein localises to the nucleus membrane. Its function is as follows. Regulatory component of the cyclin D2-CDK4 (DC) complex that phosphorylates and inhibits members of the retinoblastoma (RB) protein family including RB1 and regulates the cell-cycle during G(1)/S transition. Phosphorylation of RB1 allows dissociation of the transcription factor E2F from the RB/E2F complex and the subsequent transcription of E2F target genes which are responsible for the progression through the G(1) phase. Hypophosphorylates RB1 in early G(1) phase. Cyclin D-CDK4 complexes are major integrators of various mitogenenic and antimitogenic signals. The protein is G1/S-specific cyclin-D2 (CCND2) of Gallus gallus (Chicken).